Here is a 29-residue protein sequence, read N- to C-terminus: Photosystem I reaction center subunit XII (29 aa).

Residues 7–24 (FVALLLALVPAVLAYRLG) form a helical membrane-spanning segment.

The protein belongs to the PsaM family.

It is found in the cellular thylakoid membrane. The polypeptide is Photosystem I reaction center subunit XII (Synechococcus sp. (strain ATCC 27144 / PCC 6301 / SAUG 1402/1) (Anacystis nidulans)).